Reading from the N-terminus, the 156-residue chain is ATP synthase subunit b (156 aa).

A helical transmembrane segment spans residues 7–29; the sequence is LFAQMVVFLVLAWFTMKFVWPPL.

The protein belongs to the ATPase B chain family. In terms of assembly, F-type ATPases have 2 components, F(1) - the catalytic core - and F(0) - the membrane proton channel. F(1) has five subunits: alpha(3), beta(3), gamma(1), delta(1), epsilon(1). F(0) has three main subunits: a(1), b(2) and c(10-14). The alpha and beta chains form an alternating ring which encloses part of the gamma chain. F(1) is attached to F(0) by a central stalk formed by the gamma and epsilon chains, while a peripheral stalk is formed by the delta and b chains.

The protein resides in the cell inner membrane. Its function is as follows. F(1)F(0) ATP synthase produces ATP from ADP in the presence of a proton or sodium gradient. F-type ATPases consist of two structural domains, F(1) containing the extramembraneous catalytic core and F(0) containing the membrane proton channel, linked together by a central stalk and a peripheral stalk. During catalysis, ATP synthesis in the catalytic domain of F(1) is coupled via a rotary mechanism of the central stalk subunits to proton translocation. In terms of biological role, component of the F(0) channel, it forms part of the peripheral stalk, linking F(1) to F(0). The chain is ATP synthase subunit b from Burkholderia pseudomallei (strain 668).